Here is a 365-residue protein sequence, read N- to C-terminus: Peptide chain release factor 2 (365 aa).

Glutamine 252 bears the N5-methylglutamine mark.

This sequence belongs to the prokaryotic/mitochondrial release factor family. In terms of processing, methylated by PrmC. Methylation increases the termination efficiency of RF2.

Its subcellular location is the cytoplasm. Peptide chain release factor 2 directs the termination of translation in response to the peptide chain termination codons UGA and UAA. The protein is Peptide chain release factor 2 of Aeromonas hydrophila subsp. hydrophila (strain ATCC 7966 / DSM 30187 / BCRC 13018 / CCUG 14551 / JCM 1027 / KCTC 2358 / NCIMB 9240 / NCTC 8049).